A 268-amino-acid chain; its full sequence is Undecaprenyl-diphosphatase 1 (268 aa).

A run of 7 helical transmembrane segments spans residues 5 to 25 (SIIS…IPVS), 43 to 63 (GNTF…LVYF), 84 to 104 (LAVL…HDFI), 107 to 127 (VLFE…FILL), 184 to 204 (AAEF…VLDL), 218 to 238 (LIAV…RSLL), and 247 to 267 (APFA…LLVI).

This sequence belongs to the UppP family.

The protein localises to the cell inner membrane. It catalyses the reaction di-trans,octa-cis-undecaprenyl diphosphate + H2O = di-trans,octa-cis-undecaprenyl phosphate + phosphate + H(+). Catalyzes the dephosphorylation of undecaprenyl diphosphate (UPP). Confers resistance to bacitracin. This is Undecaprenyl-diphosphatase 1 from Agrobacterium fabrum (strain C58 / ATCC 33970) (Agrobacterium tumefaciens (strain C58)).